The chain runs to 55 residues: Large ribosomal subunit protein bL33 (55 aa).

The protein belongs to the bacterial ribosomal protein bL33 family.

The protein is Large ribosomal subunit protein bL33 of Alcanivorax borkumensis (strain ATCC 700651 / DSM 11573 / NCIMB 13689 / SK2).